Reading from the N-terminus, the 582-residue chain is 2-succinyl-5-enolpyruvyl-6-hydroxy-3-cyclohexene-1-carboxylate synthase (582 aa).

Belongs to the TPP enzyme family. MenD subfamily. Homodimer. Mg(2+) is required as a cofactor. Requires Mn(2+) as cofactor. Thiamine diphosphate serves as cofactor.

The catalysed reaction is isochorismate + 2-oxoglutarate + H(+) = 5-enolpyruvoyl-6-hydroxy-2-succinyl-cyclohex-3-ene-1-carboxylate + CO2. The protein operates within quinol/quinone metabolism; 1,4-dihydroxy-2-naphthoate biosynthesis; 1,4-dihydroxy-2-naphthoate from chorismate: step 2/7. Its pathway is quinol/quinone metabolism; menaquinone biosynthesis. Its function is as follows. Catalyzes the thiamine diphosphate-dependent decarboxylation of 2-oxoglutarate and the subsequent addition of the resulting succinic semialdehyde-thiamine pyrophosphate anion to isochorismate to yield 2-succinyl-5-enolpyruvyl-6-hydroxy-3-cyclohexene-1-carboxylate (SEPHCHC). In Chlorobaculum tepidum (strain ATCC 49652 / DSM 12025 / NBRC 103806 / TLS) (Chlorobium tepidum), this protein is 2-succinyl-5-enolpyruvyl-6-hydroxy-3-cyclohexene-1-carboxylate synthase.